A 130-amino-acid chain; its full sequence is MSMQDPISDMITRIRNGQSAKKELISMPYSNLKKSIANLLKEEGFILDYKVEDNKKPTLKLNLKYFKNNPVIEKIKRISRPGLRIYKKRKHLPNVMSGMGIAIVSTSRGIMTDKLARTYNLGGEIICYVE.

The protein belongs to the universal ribosomal protein uS8 family. In terms of assembly, part of the 30S ribosomal subunit. Contacts proteins S5 and S12.

Functionally, one of the primary rRNA binding proteins, it binds directly to 16S rRNA central domain where it helps coordinate assembly of the platform of the 30S subunit. The polypeptide is Small ribosomal subunit protein uS8 (Wigglesworthia glossinidia brevipalpis).